The primary structure comprises 150 residues: Large ribosomal subunit protein uL22c (150 aa).

This sequence belongs to the universal ribosomal protein uL22 family. In terms of assembly, part of the 50S ribosomal subunit.

It localises to the plastid. Its function is as follows. This protein binds specifically to 23S rRNA. The globular domain of the protein is located near the polypeptide exit tunnel on the outside of the subunit, while an extended beta-hairpin is found that lines the wall of the exit tunnel in the center of the 70S ribosome. This Orobanche minor (Small broomrape) protein is Large ribosomal subunit protein uL22c (rpl22).